Here is a 322-residue protein sequence, read N- to C-terminus: Arginase-1 (322 aa).

Over residues 1–12 the composition is skewed to low complexity; that stretch reads MSSKSKSIGIIG. A disordered region spans residues 1–26; the sequence is MSSKSKSIGIIGAPFSKGQPRGGVEE. The residue at position 7 (serine 7) is a Phosphoserine. Position 17 is an N6-succinyllysine (lysine 17). A Phosphoserine modification is found at serine 62. Positions 101, 124, 126, and 128 each coordinate Mn(2+). Substrate is bound by residues 126 to 130 and 137 to 139; these read HTDIN and SGN. Residue serine 163 is modified to Phosphoserine. Aspartate 183 serves as a coordination point for substrate. Mn(2+)-binding residues include aspartate 232 and aspartate 234. Substrate is bound by residues threonine 246 and glutamate 277.

The protein belongs to the arginase family. In terms of assembly, homotrimer. Interacts with CMTM6. It depends on Mn(2+) as a cofactor.

Its subcellular location is the cytoplasm. The enzyme catalyses L-arginine + H2O = urea + L-ornithine. It participates in nitrogen metabolism; urea cycle; L-ornithine and urea from L-arginine: step 1/1. The sequence is that of Arginase-1 (ARG1) from Oryctolagus cuniculus (Rabbit).